Here is a 63-residue protein sequence, read N- to C-terminus: Antimicrobial peptide 2 (63 aa).

The N-terminal stretch at 1-27 (MAKVPIAFLKFVIVLILFIAMSGMIEA) is a signal peptide. Intrachain disulfides connect Cys28–Cys45, Cys35–Cys49, and Cys44–Cys60.

This sequence belongs to the AMP family. As to quaternary structure, homodimer. As to expression, seed specific.

The protein resides in the secreted. Possesses antifungal activity and is also active on two tested Gram-positive bacteria but is non-toxic for Gram-negative bacteria and cultured human cells. This Mirabilis jalapa (Garden four-o'clock) protein is Antimicrobial peptide 2 (AMP2).